The following is a 775-amino-acid chain: Cation channel sperm-associated protein subunit epsilon-like protein (775 aa).

An N-terminal signal peptide occupies residues 1–20; sequence MLARRVVAALLLWLSCCVSA. N-linked (GlcNAc...) asparagine glycans are attached at residues Asn62 and Asn114.

This sequence belongs to the CATSPERD family.

This Mus musculus (Mouse) protein is Cation channel sperm-associated protein subunit epsilon-like protein.